The chain runs to 378 residues: Lipid-A-disaccharide synthase (378 aa).

The protein belongs to the LpxB family.

It carries out the reaction a lipid X + a UDP-2-N,3-O-bis[(3R)-3-hydroxyacyl]-alpha-D-glucosamine = a lipid A disaccharide + UDP + H(+). The protein operates within bacterial outer membrane biogenesis; LPS lipid A biosynthesis. Functionally, condensation of UDP-2,3-diacylglucosamine and 2,3-diacylglucosamine-1-phosphate to form lipid A disaccharide, a precursor of lipid A, a phosphorylated glycolipid that anchors the lipopolysaccharide to the outer membrane of the cell. This chain is Lipid-A-disaccharide synthase, found in Pseudomonas aeruginosa (strain UCBPP-PA14).